The primary structure comprises 107 residues: Integration host factor subunit beta (107 aa).

A disordered region spans residues 76–107 (FVPHFKPGKELRERVDGRAGEPLKADDPDDER). Over residues 82–101 (PGKELRERVDGRAGEPLKAD) the composition is skewed to basic and acidic residues.

The protein belongs to the bacterial histone-like protein family. Heterodimer of an alpha and a beta chain.

This protein is one of the two subunits of integration host factor, a specific DNA-binding protein that functions in genetic recombination as well as in transcriptional and translational control. The protein is Integration host factor subunit beta of Burkholderia cenocepacia (strain ATCC BAA-245 / DSM 16553 / LMG 16656 / NCTC 13227 / J2315 / CF5610) (Burkholderia cepacia (strain J2315)).